The sequence spans 109 residues: MHNISAKKFLGYLKNKCLEFGVKVIEGNPAYTSIKCPNCGSRLSQLYKLADERALPSRLMYCFDCGFYADRDTVAVFNLIKRFTGLYPFSPKSNEPIAEGTVFPDEAMG.

Positions 36, 39, 62, and 65 each coordinate Zn(2+).

The protein belongs to the transposase 35 family.

The sequence is that of Putative transposase MJ0856.1 from Methanocaldococcus jannaschii (strain ATCC 43067 / DSM 2661 / JAL-1 / JCM 10045 / NBRC 100440) (Methanococcus jannaschii).